The primary structure comprises 352 residues: Molybdenum import ATP-binding protein ModC (352 aa).

Residues 1-229 form the ABC transporter domain; that stretch reads MLELNFSQTL…SVMNPWLPKE (229 aa). 31–38 is an ATP binding site; sequence GVSGAGKT. The 64-residue stretch at 289–352 folds into the Mop domain; the sequence is QTSIRNVLRA…AQIKSVSITA (64 aa).

Belongs to the ABC transporter superfamily. Molybdate importer (TC 3.A.1.8) family. In terms of assembly, the complex is composed of two ATP-binding proteins (ModC), two transmembrane proteins (ModB) and a solute-binding protein (ModA).

The protein localises to the cell inner membrane. It catalyses the reaction molybdate(out) + ATP + H2O = molybdate(in) + ADP + phosphate + H(+). Part of the ABC transporter complex ModABC involved in molybdenum import. Responsible for energy coupling to the transport system. This is Molybdenum import ATP-binding protein ModC from Shigella boydii serotype 4 (strain Sb227).